The chain runs to 81 residues: Acyl carrier protein (81 aa).

The 76-residue stretch at 3-78 (QEIFEKVKSI…AAVDYIEKEQ (76 aa)) folds into the Carrier domain. Ser38 bears the O-(pantetheine 4'-phosphoryl)serine mark.

The protein belongs to the acyl carrier protein (ACP) family. In terms of processing, 4'-phosphopantetheine is transferred from CoA to a specific serine of apo-ACP by AcpS. This modification is essential for activity because fatty acids are bound in thioester linkage to the sulfhydryl of the prosthetic group.

The protein resides in the cytoplasm. Its pathway is lipid metabolism; fatty acid biosynthesis. Carrier of the growing fatty acid chain in fatty acid biosynthesis. The polypeptide is Acyl carrier protein (Crocosphaera subtropica (strain ATCC 51142 / BH68) (Cyanothece sp. (strain ATCC 51142))).